Here is a 2261-residue protein sequence, read N- to C-terminus: Phospholipid-transporting ATPase ABCA1 (2261 aa).

C3 carries S-palmitoyl cysteine lipidation. N-linked (GlcNAc...) asparagine glycosylation is present at N14. The chain crosses the membrane as a helical span at residues 22–42 (TCQLLLEVAWPLFIFLILISV). A lipid anchor (S-palmitoyl cysteine) is attached at C23. Topologically, residues 43 to 639 (RLSYPPYEQH…DIFLRVMSRS (597 aa)) are extracellular. Positions 69–80 (WVQGIICNANNP) are annulus domain 1. C75 and C309 form a disulfide bridge. N98, N151, N161, N196, N244, N292, N337, and N349 each carry an N-linked (GlcNAc...) asparagine glycan. The tract at residues 368–379 (SRIIWKALKPLL) is annulus domain 2. 4 N-linked (GlcNAc...) asparagine glycosylation sites follow: N400, N478, N489, and N521. A gateway domain region spans residues 564 to 594 (ERTNKIKDGYWDPGPRADPFEDMRYVWGGFA). 5 consecutive transmembrane segments (helical) span residues 640 to 660 (MPLFMTLAWIYSVAVIIKSIV), 683 to 703 (FSWFVSSLIPLLVSAGLLVVI), 716 to 736 (SVVFVFLSVFAMVTILQCFLI), 745 to 765 (LAAACGGIIYFTLYLPYVLCV), and 777 to 797 (IFASLLSPVAFGFGCEYFALF). N-linked (GlcNAc...) asparagine glycosylation is present at N820. A helical membrane pass occupies residues 827–847 (MMLFDTFLYGVMTWYIEAVFP). One can recognise an ABC transporter 1 domain in the interval 899 to 1131 (VSIQNLVKVY…LGTGYYLTLV (233 aa)). ATP is bound at residue 933 to 940 (GHNGAGKT). Residues 941–961 (TTMSILTGLFPPTSGTAYILG) traverse the membrane as a helical segment. S1042 is subject to Phosphoserine; by PKA. S-palmitoyl cysteine attachment occurs at residues C1110 and C1111. 2 N-linked (GlcNAc...) asparagine glycosylation sites follow: N1144 and N1294. Residues 1285-1310 (FTEDDAVDPNDSDIDPESRETDLLSG) are disordered. A compositionally biased stretch (acidic residues) spans 1287 to 1299 (EDDAVDPNDSDID). A Phosphoserine modification is found at S1296. The helical transmembrane segment at 1351–1371 (IVLPAVFVCIALVFSLIVPPF) threads the bilayer. Topologically, residues 1372-1656 (GKYPSLELQP…ALMTTSVDVL (285 aa)) are extracellular. N-linked (GlcNAc...) asparagine glycosylation is present at N1453. A disulfide bridge connects residues C1463 and C1477. N1499, N1504, and N1637 each carry an N-linked (GlcNAc...) asparagine glycan. 6 helical membrane passes run 1657–1677 (VSICVIFAMSFVPASFVVFLI), 1703–1723 (FVWDMCNYVVPATLVIIIFIC), 1735–1755 (LPVLALLLLLYGWSITPLMYP), 1768–1788 (VVLTSVNLFIGINGSVATFVL), 1802–1822 (ILKSVFLIFPHFCLGRGLIDM), and 1852–1872 (NLFAMAVEGVVFFLITVLIQY). The ABC transporter 2 domain occupies 1912–2144 (LEIKELTKIY…FGDGYTIVVR (233 aa)). 1946-1953 (GVNGAGKS) contacts ATP. An N-linked (GlcNAc...) asparagine glycan is attached at N2044. At S2054 the chain carries Phosphoserine; by PKA. N-linked (GlcNAc...) asparagine glycosylation occurs at N2238.

This sequence belongs to the ABC transporter superfamily. ABCA family. Interacts with MEGF10. May interact with APOE1; functionally associated with APOE1 in the biogenesis of HDLs. Interacts with ABCA8; this interaction potentiates cholesterol efflux. Interacts with ABCA12 and NR1H2; this interaction is required for ABCA1 localization to the cell surface and is necessary for its normal activity and stability. Phosphorylation on Ser-2054 regulates phospholipid efflux. Post-translationally, palmitoylated by ZDHHC8. Palmitoylation is essential for localization to the plasma membrane. Widely expressed in adult tissues. Highest levels are found in pregnant uterus and uterus.

Its subcellular location is the cell membrane. It localises to the endosome. The catalysed reaction is ATP + H2O + phospholipidSide 1 = ADP + phosphate + phospholipidSide 2.. The enzyme catalyses a 1,2-diacyl-sn-glycero-3-phosphocholine(out) + ATP + H2O = a 1,2-diacyl-sn-glycero-3-phosphocholine(in) + ADP + phosphate + H(+). It catalyses the reaction a 1,2-diacyl-sn-glycero-3-phospho-L-serine(out) + ATP + H2O = a 1,2-diacyl-sn-glycero-3-phospho-L-serine(in) + ADP + phosphate + H(+). It carries out the reaction a sphingomyelin(in) + ATP + H2O = a sphingomyelin(out) + ADP + phosphate + H(+). The catalysed reaction is cholesterol(in) + ATP + H2O = cholesterol(out) + ADP + phosphate + H(+). With respect to regulation, ATPase activity is decreased by cholesterol and ceramide. ATPase activity is stimulated by phosphatidylcholine and to a lesser degree by phosphatidylserine and sphingomyelin. Phospholipid translocase activity is highly reduced by berylium fluoride and aluminum flouride and reduced by N-ethylmaleimide. Catalyzes the translocation of specific phospholipids from the cytoplasmic to the extracellular/lumenal leaflet of membrane coupled to the hydrolysis of ATP. Thereby, participates in phospholipid transfer to apolipoproteins to form nascent high density lipoproteins/HDLs. Transports preferentially phosphatidylcholine over phosphatidylserine. May play a similar role in the efflux of intracellular cholesterol to apolipoproteins and the formation of nascent high density lipoproteins/HDLs. Translocates phospholipids from the outer face of the plasma membrane and forces it through its gateway and annulus into an elongated hydrophobic tunnel in its extracellular domain. This Mus musculus (Mouse) protein is Phospholipid-transporting ATPase ABCA1.